The sequence spans 446 residues: Probable glycine dehydrogenase (decarboxylating) subunit 1 (446 aa).

This sequence belongs to the GcvP family. N-terminal subunit subfamily. In terms of assembly, the glycine cleavage system is composed of four proteins: P, T, L and H. In this organism, the P 'protein' is a heterodimer of two subunits.

It carries out the reaction N(6)-[(R)-lipoyl]-L-lysyl-[glycine-cleavage complex H protein] + glycine + H(+) = N(6)-[(R)-S(8)-aminomethyldihydrolipoyl]-L-lysyl-[glycine-cleavage complex H protein] + CO2. Its function is as follows. The glycine cleavage system catalyzes the degradation of glycine. The P protein binds the alpha-amino group of glycine through its pyridoxal phosphate cofactor; CO(2) is released and the remaining methylamine moiety is then transferred to the lipoamide cofactor of the H protein. This is Probable glycine dehydrogenase (decarboxylating) subunit 1 from Desulforamulus reducens (strain ATCC BAA-1160 / DSM 100696 / MI-1) (Desulfotomaculum reducens).